Reading from the N-terminus, the 151-residue chain is 3-dehydroquinate dehydratase (151 aa).

Y26 acts as the Proton acceptor in catalysis. Substrate-binding residues include N77, H83, and D90. The Proton donor role is filled by H103. Substrate-binding positions include 104-105 (LS) and R114.

It belongs to the type-II 3-dehydroquinase family. In terms of assembly, homododecamer.

It carries out the reaction 3-dehydroquinate = 3-dehydroshikimate + H2O. It functions in the pathway metabolic intermediate biosynthesis; chorismate biosynthesis; chorismate from D-erythrose 4-phosphate and phosphoenolpyruvate: step 3/7. Functionally, catalyzes a trans-dehydration via an enolate intermediate. The polypeptide is 3-dehydroquinate dehydratase (Pelodictyon phaeoclathratiforme (strain DSM 5477 / BU-1)).